The sequence spans 358 residues: Peptide chain release factor 1 (358 aa).

Position 233 is an N5-methylglutamine (glutamine 233).

The protein belongs to the prokaryotic/mitochondrial release factor family. Methylated by PrmC. Methylation increases the termination efficiency of RF1.

The protein localises to the cytoplasm. In terms of biological role, peptide chain release factor 1 directs the termination of translation in response to the peptide chain termination codons UAG and UAA. In Blochmanniella floridana, this protein is Peptide chain release factor 1.